A 148-amino-acid polypeptide reads, in one-letter code: Large ribosomal subunit protein uL15 (148 aa).

The interval 1–57 is disordered; that stretch reads MRLHDLYPFPEERKTRKRVGRGSGSGLGCTSGKGNKGQNARAGGGVRPGFEGGQMPL. Gly residues-rich tracts occupy residues 21-35 and 42-52; these read RGSGSGLGCTSGKGN and AGGGVRPGFEG.

This sequence belongs to the universal ribosomal protein uL15 family. Part of the 50S ribosomal subunit.

In terms of biological role, binds to the 23S rRNA. This chain is Large ribosomal subunit protein uL15, found in Nitratidesulfovibrio vulgaris (strain ATCC 29579 / DSM 644 / CCUG 34227 / NCIMB 8303 / VKM B-1760 / Hildenborough) (Desulfovibrio vulgaris).